Reading from the N-terminus, the 395-residue chain is Vacuolar protease A (395 aa).

The signal sequence occupies residues 1-18 (MKGSLLLAGATLLGCTSA). Positions 19-72 (KLHSLKLKKVSLKEQLEHADIDVQIKSLGQKYMGIRPGQHEQQMFKEQTPIEAE) are cleaved as a propeptide — activation peptide. Residues 87–392 (YFSEISIGTP…DLGKGTVGLA (306 aa)) form the Peptidase A1 domain. The active site involves Asp-105. Cys-118 and Cys-123 form a disulfide bridge. Asn-140 is a glycosylation site (N-linked (GlcNAc...) asparagine). Residue Asp-289 is part of the active site. The cysteines at positions 318 and 351 are disulfide-linked. The N-linked (GlcNAc...) asparagine glycan is linked to Asn-335.

It belongs to the peptidase A1 family.

Its subcellular location is the vacuole lumen. It localises to the secreted. It catalyses the reaction Hydrolysis of proteins with broad specificity for peptide bonds. Cleaves -Leu-Leu-|-Val-Tyr- bond in a synthetic substrate. Does not act on esters of Tyr or Arg.. Functionally, vacuolar aspartic endopeptidase which is probably also secreted and contributes to virulence. This is Vacuolar protease A (PEP2) from Arthroderma otae (strain ATCC MYA-4605 / CBS 113480) (Microsporum canis).